A 383-amino-acid polypeptide reads, in one-letter code: MSPTLALTEDLIRRRSVTPEDKGCQDVLIERLSAAGFQCETVVSGPDHFRVTNLWAVKRGRAGTDGKLLVFAGHTDVVPTGPVEQWRSDPFEPTHRDGKLYGRGAADMKTSIAGFVVAAEEFVAVHPDHAGSIGFLITSDEEGPAHDGTIKVCDLLRTRGERLDYCVVGEPTSVSTLGDMVKNGRRGSLSGKLTVNGVQGHIAYPHLAKNPIHLAVPALTALAAEQWDDGNAYFPPTTWQMSNIHGGTGATNVIPGHVIIDFNFRFSTASTPEGLKSRVHAILDAHGLDYTLAWTLGGEPFLTERGELSEALSSAIGAECGVATELSTTGGTSDGRFIAKLCPQVIEFGPPNASIHKIDEHVDVAFIEPLKNVYRRVLETLIA.

Residue histidine 74 coordinates Zn(2+). Aspartate 76 is a catalytic residue. A Zn(2+)-binding site is contributed by aspartate 107. The Proton acceptor role is filled by glutamate 141. 3 residues coordinate Zn(2+): glutamate 142, glutamate 170, and histidine 356.

It belongs to the peptidase M20A family. DapE subfamily. Homodimer. Requires Zn(2+) as cofactor. It depends on Co(2+) as a cofactor.

The catalysed reaction is N-succinyl-(2S,6S)-2,6-diaminopimelate + H2O = (2S,6S)-2,6-diaminopimelate + succinate. It participates in amino-acid biosynthesis; L-lysine biosynthesis via DAP pathway; LL-2,6-diaminopimelate from (S)-tetrahydrodipicolinate (succinylase route): step 3/3. Its function is as follows. Catalyzes the hydrolysis of N-succinyl-L,L-diaminopimelic acid (SDAP), forming succinate and LL-2,6-diaminopimelate (DAP), an intermediate involved in the bacterial biosynthesis of lysine and meso-diaminopimelic acid, an essential component of bacterial cell walls. In Ralstonia nicotianae (strain ATCC BAA-1114 / GMI1000) (Ralstonia solanacearum), this protein is Succinyl-diaminopimelate desuccinylase.